A 424-amino-acid chain; its full sequence is MSDLQGRKVFKVFNQDFIVDERYNVTKELGQGAYGIVCAATNVHTGEGVAIKKVTNVFSKKILAKRALREIKLLQHFRGHRNITCLYDMDIPRPDNFNETYLYEELMECDLAAIIRSGQPLTDAHFQSFIYQILCGLKYIHSANVLHRDLKPGNLLVNADCELKICDFGLARGFSIDPEENAGYMTEYVATRWYRAPEIMLSFQSYTKAIDVWSVGCILAELLGGRPFFKGRDYVDQLNQILHYLGTPNEETLSRIGSPRAQEYVRNLPFMPKIPFQRLFPNANPDALDLLDRMLAFDPASRISVEEALEHPYLHIWHDASDEPTCPTTFDFHFEVVDDVQEMRKMIYDEVVRFRNLVRQQSQAQAAAAAQQQQQQIAQQTNVPIPDHQQGGWKQEEPKPQEVHAAGGHVNDLESSLQRGMDVQ.

Residues 23–314 (YNVTKELGQG…VEEALEHPYL (292 aa)) form the Protein kinase domain. ATP is bound by residues 29 to 37 (LGQGAYGIV) and K52. A disordered region spans residues 375-424 (QQIAQQTNVPIPDHQQGGWKQEEPKPQEVHAAGGHVNDLESSLQRGMDVQ).

The protein belongs to the protein kinase superfamily. Ser/Thr protein kinase family. As to quaternary structure, interacts with flbB, flbC, brlA, and rasB. Interacts with fmqA and fmqC. Interacts with hsp90. It depends on Mg(2+) as a cofactor. In terms of processing, phosphorylated by the upstreamm MAPKK mkk2. Phosphorylation is induced during asexual development. Phosphorylation is regulated by rlmA.

The catalysed reaction is L-seryl-[protein] + ATP = O-phospho-L-seryl-[protein] + ADP + H(+). It catalyses the reaction L-threonyl-[protein] + ATP = O-phospho-L-threonyl-[protein] + ADP + H(+). Activated by threonine and tyrosine phosphorylation by the upstreamm MAPKK mkk2. Its function is as follows. Mitogen-activated protein kinase; part of cell wall integrity (CWI) signaling pathway composed of pkcA, the bck1-mkk2-mpka MAPK cascade and the downstream rlmA transcription regulator. The CWI signaling pathway regulates cell wall integrity and pyomelanin formation. CWI also controls oxidative stress response, gliotoxin production, iron adaptation and asexual development. Finally, CWI is constitutively required for A.fumigatus to cope with the temperature increase found in the mammalian lung environment, during infection. MpkA positively modulates the expression of fumiquinazoline cluster during conidiogenesis and directly phosphorylates fmqC, and perhaps also fmqA. The polypeptide is Mitogen-activated protein kinase mpkA (Aspergillus fumigatus (strain ATCC MYA-4609 / CBS 101355 / FGSC A1100 / Af293) (Neosartorya fumigata)).